A 274-amino-acid polypeptide reads, in one-letter code: Large ribosomal subunit protein uL2 (274 aa).

A disordered region spans residues 223–274 (VAMNPVDHPHGGGEGRTSGGRHPVTPWGVPTKGYKTRSNKRTDKYIVRRRNK).

It belongs to the universal ribosomal protein uL2 family. As to quaternary structure, part of the 50S ribosomal subunit. Forms a bridge to the 30S subunit in the 70S ribosome.

In terms of biological role, one of the primary rRNA binding proteins. Required for association of the 30S and 50S subunits to form the 70S ribosome, for tRNA binding and peptide bond formation. It has been suggested to have peptidyltransferase activity; this is somewhat controversial. Makes several contacts with the 16S rRNA in the 70S ribosome. The protein is Large ribosomal subunit protein uL2 of Shewanella baltica (strain OS223).